Consider the following 340-residue polypeptide: Photosystem II protein D1 (340 aa).

Transmembrane regions (helical) follow at residues 25-42, 114-129, and 138-152; these read YIGW…LATV, HFFL…EWEF, and WIFV…AAAA. His114 is a binding site for chlorophyll a. Trp122 is a binding site for pheophytin a. Residues Asp166 and Glu185 each contribute to the [CaMn4O5] cluster site. A helical transmembrane segment spans residues 193–214; sequence FHILGVAGVFGGSLFSAMHGSL. His194 serves as a coordination point for chlorophyll a. A quinone contacts are provided by residues His211 and 260 to 261; that span reads SF. His211 contributes to the Fe cation binding site. His268 is a Fe cation binding site. A helical transmembrane segment spans residues 270–284; it reads FLAAWPVIGIWFTSL. [CaMn4O5] cluster contacts are provided by His328, Glu329, Asp338, and Ala340.

The protein belongs to the reaction center PufL/M/PsbA/D family. In terms of assembly, PSII is composed of 1 copy each of membrane proteins PsbA, PsbB, PsbC, PsbD, PsbE, PsbF, PsbH, PsbI, PsbJ, PsbK, PsbL, PsbM, PsbT, PsbX, PsbY, PsbZ, Psb30/Ycf12, at least 3 peripheral proteins of the oxygen-evolving complex and a large number of cofactors. It forms dimeric complexes. Requires The D1/D2 heterodimer binds P680, chlorophylls that are the primary electron donor of PSII, and subsequent electron acceptors. It shares a non-heme iron and each subunit binds pheophytin, quinone, additional chlorophylls, carotenoids and lipids. D1 provides most of the ligands for the Mn4-Ca-O5 cluster of the oxygen-evolving complex (OEC). There is also a Cl(-1) ion associated with D1 and D2, which is required for oxygen evolution. The PSII complex binds additional chlorophylls, carotenoids and specific lipids. as cofactor. Post-translationally, tyr-157 forms a radical intermediate that is referred to as redox-active TyrZ, YZ or Y-Z.

Its subcellular location is the plastid. It localises to the chloroplast thylakoid membrane. It carries out the reaction 2 a plastoquinone + 4 hnu + 2 H2O = 2 a plastoquinol + O2. Functionally, photosystem II (PSII) is a light-driven water:plastoquinone oxidoreductase that uses light energy to abstract electrons from H(2)O, generating O(2) and a proton gradient subsequently used for ATP formation. It consists of a core antenna complex that captures photons, and an electron transfer chain that converts photonic excitation into a charge separation. The D1/D2 (PsbA/PsbD) reaction center heterodimer binds P680, the primary electron donor of PSII as well as several subsequent electron acceptors. This is Photosystem II protein D1 from Amphidinium operculatum (Dinoflagellate).